The following is a 364-amino-acid chain: Spermidine/putrescine import ATP-binding protein PotA (364 aa).

The region spanning 6–236 (IEIRQIYKSY…PANLHVAMFI (231 aa)) is the ABC transporter domain. Residue 38–45 (GPSGCGKT) participates in ATP binding.

The protein belongs to the ABC transporter superfamily. Spermidine/putrescine importer (TC 3.A.1.11.1) family. As to quaternary structure, the complex is composed of two ATP-binding proteins (PotA), two transmembrane proteins (PotB and PotC) and a solute-binding protein (PotD).

The protein resides in the cell inner membrane. The catalysed reaction is ATP + H2O + polyamine-[polyamine-binding protein]Side 1 = ADP + phosphate + polyamineSide 2 + [polyamine-binding protein]Side 1.. In terms of biological role, part of the ABC transporter complex PotABCD involved in spermidine/putrescine import. Responsible for energy coupling to the transport system. The protein is Spermidine/putrescine import ATP-binding protein PotA of Legionella pneumophila subsp. pneumophila (strain Philadelphia 1 / ATCC 33152 / DSM 7513).